A 496-amino-acid chain; its full sequence is Probable glycine betaine transporter (496 aa).

12 helical membrane-spanning segments follow: residues 11–31 (TVLYISSAIALLFVLWGVFLP), 49–69 (FGWLYLLAVAIFIIFVFGIAI), 89–109 (FQWFAMLFGGGMGIGLVFWSV), 136–156 (VVFFHWGIHAWVNFAIAGLAL), 188–208 (AIDILAVFATIFGIATSLGLG), 219–239 (IWGIPAGPLTISLVIAVITVI), 260–280 (VWLSVAFMVFIFYFGGKVFIL), 306–326 (WVGGWTIFYWAWWIAWAPFVG), 341–361 (FVFAVTLLPVGFSFIWLAIYG), 396–416 (LYAITGPLAILLIVTCFVGAA), 441–461 (FWGIMQGAMTIVLIVVGGTAA), and 468–488 (ASIASAFPFMLIMLVMCYSIL).

It belongs to the BCCT transporter (TC 2.A.15) family.

It is found in the cell membrane. Probably acts in the uptake of glycine betaine. May function in the pathway that allows anaerobic methylotrophic growth of D.hafniense using glycine betaine. This chain is Probable glycine betaine transporter, found in Desulfitobacterium hafniense (strain Y51).